The chain runs to 100 residues: uncharacterized protein (100 aa).

A run of 2 helical transmembrane segments spans residues 30–50 (FHIP…PLAF) and 69–89 (FLLI…LPFF).

The protein resides in the cytoplasm. It is found in the nucleus membrane. This is an uncharacterized protein from Schizosaccharomyces pombe (strain 972 / ATCC 24843) (Fission yeast).